Reading from the N-terminus, the 181-residue chain is Photosystem I assembly protein Ycf4 (181 aa).

2 helical membrane-spanning segments follow: residues 19 to 39 (YFWASLLLVGGLMFLLAGISS) and 61 to 81 (IVMMFYGTLSFGLSIYIMATL).

Belongs to the Ycf4 family.

Its subcellular location is the plastid. The protein resides in the chloroplast thylakoid membrane. In terms of biological role, seems to be required for the assembly of the photosystem I complex. The sequence is that of Photosystem I assembly protein Ycf4 from Thalassiosira pseudonana (Marine diatom).